A 1241-amino-acid chain; its full sequence is ATP-dependent helicase/nuclease subunit A (1241 aa).

The 474-residue stretch at 12-485 (SQWTDDQWKA…IDLAKNFRSR (474 aa)) folds into the UvrD-like helicase ATP-binding domain. Position 33 to 40 (33 to 40 (AAAGSGKT)) interacts with ATP. In terms of domain architecture, UvrD-like helicase C-terminal spans 505-805 (GEIDYDADAE…RIMTIHKSKG (301 aa)).

The protein belongs to the helicase family. AddA subfamily. As to quaternary structure, heterodimer of AddA and AddB/RexB. Requires Mg(2+) as cofactor.

It carries out the reaction Couples ATP hydrolysis with the unwinding of duplex DNA by translocating in the 3'-5' direction.. It catalyses the reaction ATP + H2O = ADP + phosphate + H(+). The heterodimer acts as both an ATP-dependent DNA helicase and an ATP-dependent, dual-direction single-stranded exonuclease. Recognizes the chi site generating a DNA molecule suitable for the initiation of homologous recombination. The AddA nuclease domain is required for chi fragment generation; this subunit has the helicase and 3' -&gt; 5' nuclease activities. The chain is ATP-dependent helicase/nuclease subunit A from Bacillus thuringiensis subsp. konkukian (strain 97-27).